The primary structure comprises 102 residues: NADH-quinone oxidoreductase subunit K (102 aa).

3 helical membrane-spanning segments follow: residues 2–22 (LDFYILVALILFFIGVLGVIL), 26–46 (IFTIFMSVELMLNATALIFAT), and 58–78 (VIVMLIIAIAAAEASFGLALI).

It belongs to the complex I subunit 4L family. As to quaternary structure, NDH-1 is composed of 14 different subunits. Subunits NuoA, H, J, K, L, M, N constitute the membrane sector of the complex.

It is found in the cell inner membrane. It catalyses the reaction a quinone + NADH + 5 H(+)(in) = a quinol + NAD(+) + 4 H(+)(out). Functionally, NDH-1 shuttles electrons from NADH, via FMN and iron-sulfur (Fe-S) centers, to quinones in the respiratory chain. The immediate electron acceptor for the enzyme in this species is believed to be ubiquinone. Couples the redox reaction to proton translocation (for every two electrons transferred, four hydrogen ions are translocated across the cytoplasmic membrane), and thus conserves the redox energy in a proton gradient. This Campylobacter fetus subsp. fetus (strain 82-40) protein is NADH-quinone oxidoreductase subunit K.